The sequence spans 220 residues: Large ribosomal subunit protein uL10c (220 aa).

Residues 1 to 41 constitute a chloroplast transit peptide; the sequence is MEVALLSFSSSLSPLCHQRISTLTPKTSNSPNYPRLPVIRS.

This sequence belongs to the universal ribosomal protein uL10 family. As to quaternary structure, part of the 50S ribosomal subunit.

The protein resides in the plastid. The protein localises to the chloroplast. Its function is as follows. This protein binds directly to 23S ribosomal RNA. The polypeptide is Large ribosomal subunit protein uL10c (RPL10) (Arabidopsis thaliana (Mouse-ear cress)).